Here is a 754-residue protein sequence, read N- to C-terminus: Circadian input-output histidine kinase CikA (754 aa).

The interval 1 to 183 (MLAPSSNCSL…QVSAQIRLSL (183 aa)) is N-terminal domain, not required to complement the deletion strain. The GAF domain, required to complement the deletion strain stretch occupies residues 184-338 (DLSEILTTTI…RDILQHLAEH (155 aa)). Residues 390-611 (TMSHELRTPL…TFTVWIPEQT (222 aa)) enclose the Histidine kinase domain. His-393 carries the post-translational modification Phosphohistidine; by autocatalysis. The tract at residues 606–754 (WIPEQTLIEP…NLSEGDRPSS (149 aa)) is psR domain, required to complement the deletion strain and for cell pole localization, attenuates autophosphorylation activity. Binds KaiB(fs). Positions 629–742 (HILLLEEEDE…LLLTTLQGLC (114 aa)) constitute a Response regulatory domain.

The protein in the N-terminal section; belongs to the phytochrome family. Homodimer. Part of the circadian clock (KaiA, KaiB, KaiC, CikA, RpaA, SasA), the composition of which varies during the circadian cycle. Interacts with LdpA. KaiA and CikA compete for binding to KaiB(fs).

It localises to the cytoplasm. Its subcellular location is the membrane. It catalyses the reaction ATP + protein L-histidine = ADP + protein N-phospho-L-histidine.. Its function is as follows. Functions in an input pathway to the Kai circadian clock. Senses oxidized quinones via its C-terminal pseudo-receiver domain, providing a link between cell metabolism and the clock. Affects the ratio of phosphorylated to unphosphorylated KaiC, binds quinones via its pseudo-receptor domain. Quinone-binding destabilizes the protein rapidly. Autophosphorylates, does not transfer the phosphate to its pseudo-receiver (PsR) domain. May play a role in cell division, as suggested by its polar location and increased cell length in a deletion strain. In terms of biological role, member of the two-component regulatory system CikA/RpaA output pathway from the circadian clock, negatively regulating kaiBC expression independently of labA and of sasA. One of three clock output pathways. Dephosphorylates phospho-RpaA, enhanced by KaiB and KaiC, has only modest kinase activity on RpaA. A very robust clock is reconstituted with KaiA, KaiB, KaiC, SasA, CikA and RpaA; output is measured by transcription from an appropriate reporter. The polypeptide is Circadian input-output histidine kinase CikA (Synechococcus elongatus (strain ATCC 33912 / PCC 7942 / FACHB-805) (Anacystis nidulans R2)).